Reading from the N-terminus, the 173-residue chain is Probable capsid assembly scaffolding protein (173 aa).

A compositionally biased stretch (low complexity) spans 1 to 13; the sequence is MSDNPTPESTPEA. The disordered stretch occupies residues 1-27; that stretch reads MSDNPTPESTPEAETPEVEKPMEPQGK. A coiled-coil region spans residues 36–84; that stretch reads SLRQEAAAARVAKKDAVEAAEARVKAEYEAKLAERDTAYTELQNQLGQA. The tract at residues 134 to 158 is disordered; that stretch reads GNKTPSPAFDPSQGRGGKPPIPLNG.

Belongs to the L5likevirus scaffolding protein family.

In terms of biological role, scaffolding protein involved in the icosahedric procapsid assembly. Coassembles with the capsid proteins to form the procapsid, in which the scaffolding protein is found within the external shell of icosahedrally arranged capsid protein subunits. The chain is Probable capsid assembly scaffolding protein (16) from Mycobacterium (Mycobacteriophage L5).